A 675-amino-acid chain; its full sequence is Zinc finger protein 526 (675 aa).

C2H2-type zinc fingers lie at residues 56–78 (FMCSECGSLYNTLEEVLSHQEQH), 108–130 (FQCGECSQLILSPSELLAHQDAH), and 140–163 (YQCGDCQELFPSPELWVAHRKTQH). Residues 160–195 (KTQHLSSAADEPPSPLPPPTPPPPPPPPPPPPPPEV) are disordered. Residues 171-194 (PPSPLPPPTPPPPPPPPPPPPPPE) are compositionally biased toward pro residues. Residues 200–222 (YECPECSTLCATPEEFLEHQGTH) form a C2H2-type 4 zinc finger. Residues 225–234 (SLEKEEHNGL) show a composition bias toward basic and acidic residues. Residues 225–283 (SLEKEEHNGLEEEEEDEEEGEEEEDDDDEETDEEEASSELTADDTGSNKSTADSAQSCG) form a disordered region. The span at 235-261 (EEEEEDEEEGEEEEDDDDEETDEEEAS) shows a compositional bias: acidic residues. The span at 269–281 (TGSNKSTADSAQS) shows a compositional bias: polar residues. C2H2-type zinc fingers lie at residues 312–334 (FHCSQCQRSFSSANRLVAHGRAH), 339–361 (HECTTCSKVFKKAASLEQHQRLH), 367–389 (YLCVDCGRGFGTELTLVAHRRAH), and 395–416 (HRCRCGKTFSNMTKFLYHRRTH). The disordered stretch occupies residues 415–439 (THTGKSGTPTRVATVSPAPAEPTPP). Residues 418–427 (GKSGTPTRVA) show a composition bias toward polar residues. 5 consecutive C2H2-type zinc fingers follow at residues 447–470 (LPCPQCPKSFASASRLSRHRRAVH), 477–499 (HRCGVCGKGFKKLVHVRNHLRTH), 505–527 (FQCHSCGKTFASLANLSRHQLTH), 533–555 (YQCLDCGKRFTQSSNLQQHRRLH), and 578–600 (YYCGTCGRWFRAMAGLRLHQRVH). The interval 606 to 625 (LTLQPPRSPSPVPPPPPEPQ) is disordered. A compositionally biased stretch (pro residues) spans 611–624 (PRSPSPVPPPPPEP).

The protein belongs to the krueppel C2H2-type zinc-finger protein family.

Its subcellular location is the nucleus. Functionally, may be involved in transcriptional regulation. This Mus musculus (Mouse) protein is Zinc finger protein 526 (Znf526).